Here is a 177-residue protein sequence, read N- to C-terminus: Biotin-dependent acetyl-/propionyl-coenzyme A carboxylase epsilon subunit (177 aa).

The tract at residues 1–112 (MGTCPCESSE…TEKPLHPHEP (112 aa)) is disordered. A compositionally biased stretch (polar residues) spans 18–100 (VSGTNEVSDG…SDGNETNNPA (83 aa)).

Interacts with the AccA3/AccD5 biotin-dependent acyl-CoA carboxylase complex. Interacts with the AccA3/AccD6 complex. Is also part of the long-chain acyl-CoA carboxylase (LCC) complex, which is composed of AccA3, AccD4, AccD5 and AccE5. The four subunits are essential for activity, but AccD5, together with AccE5, probably plays a structural role rather than a catalytic one.

Stimulates activity of the AccA3/AccD5 biotin-dependent acyl-CoA carboxylase complex. Interacts with AccD5 and modulates its carboxylase activity for acetyl-CoA and propionyl-CoA. Inhibits activity of the AccA3/AccD6 complex. Is also required for the activity of the long-chain acyl-CoA carboxylase (LCC) complex. This Mycobacterium tuberculosis (strain ATCC 25618 / H37Rv) protein is Biotin-dependent acetyl-/propionyl-coenzyme A carboxylase epsilon subunit.